A 435-amino-acid chain; its full sequence is S-locus-specific glycoprotein BS29-2 (435 aa).

Residues 1–30 (MKGVGKPYENSHTSFLLVFFVLTLFSPAFS) form the signal peptide. One can recognise a Bulb-type lectin domain in the interval 33-155 (TLSSIESLKI…NKNDRSGFLW (123 aa)). N-linked (GlcNAc...) asparagine glycans are attached at residues Asn113, Asn120, Asn244, Asn260, and Asn389. Residues 350-430 (CSGDGFTRMK…NGQDLYVRLA (81 aa)) enclose the PAN domain. 2 cysteine pairs are disulfide-bonded: Cys380-Cys405 and Cys388-Cys390.

In terms of tissue distribution, stigma.

Its function is as follows. Involved in sporophytic self-incompatibility system (the inability of flowering plants to achieve self-fertilization). The chain is S-locus-specific glycoprotein BS29-2 (SLSG) from Brassica oleracea var. alboglabra (Chinese kale).